Here is a 428-residue protein sequence, read N- to C-terminus: 3-phosphoshikimate 1-carboxyvinyltransferase (428 aa).

3-phosphoshikimate contacts are provided by lysine 22, serine 23, and arginine 27. Lysine 22 provides a ligand contact to phosphoenolpyruvate. Phosphoenolpyruvate is bound by residues glycine 96 and arginine 124. Residues serine 170, serine 171, glutamine 172, serine 198, aspartate 314, asparagine 337, and lysine 341 each contribute to the 3-phosphoshikimate site. Glutamine 172 lines the phosphoenolpyruvate pocket. Aspartate 314 functions as the Proton acceptor in the catalytic mechanism. Positions 345, 387, and 412 each coordinate phosphoenolpyruvate.

This sequence belongs to the EPSP synthase family. As to quaternary structure, monomer.

The protein resides in the cytoplasm. The enzyme catalyses 3-phosphoshikimate + phosphoenolpyruvate = 5-O-(1-carboxyvinyl)-3-phosphoshikimate + phosphate. Its pathway is metabolic intermediate biosynthesis; chorismate biosynthesis; chorismate from D-erythrose 4-phosphate and phosphoenolpyruvate: step 6/7. Catalyzes the transfer of the enolpyruvyl moiety of phosphoenolpyruvate (PEP) to the 5-hydroxyl of shikimate-3-phosphate (S3P) to produce enolpyruvyl shikimate-3-phosphate and inorganic phosphate. This is 3-phosphoshikimate 1-carboxyvinyltransferase from Vibrio vulnificus (strain YJ016).